The chain runs to 131 residues: MATVPTRSGSPRQLTTKQTGDAWEAQARRWLEGKGLRFIAANVNERGGEIDLIMREGRTTVFVEVRYRRSALYGGAAASVTRSKQHKLLQTARLWLARHNGSFDTVDCRFDVVAFTGNEVEWIKDAFNDHS.

A compositionally biased stretch (polar residues) spans 1-19; the sequence is MATVPTRSGSPRQLTTKQT. The tract at residues 1-21 is disordered; it reads MATVPTRSGSPRQLTTKQTGD.

It belongs to the UPF0102 family.

The protein is UPF0102 protein YraN of Escherichia coli O7:K1 (strain IAI39 / ExPEC).